Reading from the N-terminus, the 436-residue chain is Prenyltransferase nscD (436 aa).

It belongs to the tryptophan dimethylallyltransferase family.

It participates in secondary metabolite biosynthesis. Its function is as follows. Prenyltransferase; part of the gene cluster that mediates the biosynthesis of neosartoricin B, a prenylated anthracenone that probably exhibits T-cell antiproliferative activity, suggestive of a physiological role as an immunosuppressive agent. The non-reducing polyketide synthase nscA probably synthesizes and cyclizes the decaketide backbone. The hydrolase nscB then mediates the product release through hydrolysis followed by spontaneous decarboxylation. The prenyltransferase nscD catalyzes the addition of the dimethylallyl group to the aromatic C5. The FAD-dependent monooxygenase nscC is then responsible for the stereospecific hydroxylation at C2. Neosartoricin B can be converted into two additional compounds neosartoricins C and D. Neosartoricin C is a spirocyclic compound that is cyclized through the attack of C3 hydroxyl on C14, followed by dehydration. On the other hand, neosartoricin D is a further cyclized compound in which attack of C2 on C14 in neosartoricin C results in the formation of the acetal-containing dioxabicyclo-octanone ring. Both of these compounds are novel and possibly represent related metabolites of the gene cluster. The protein is Prenyltransferase nscD of Arthroderma benhamiae (strain ATCC MYA-4681 / CBS 112371) (Trichophyton mentagrophytes).